A 508-amino-acid polypeptide reads, in one-letter code: Small ribosomal subunit protein uS3m (508 aa).

The protein belongs to the universal ribosomal protein uS3 family. Component of the mitochondrial small ribosomal subunit (mt-SSU). Mature N.crassa 74S mitochondrial ribosomes consist of a small (37S) and a large (54S) subunit. The 37S small subunit contains a 16S ribosomal RNA (16S mt-rRNA) and 32 different proteins. The 54S large subunit contains a 23S rRNA (23S mt-rRNA) and 42 different proteins. uS3m, uS4m and uS5m form the narrow entry site of the mRNA channel.

The protein localises to the mitochondrion. Component of the mitochondrial ribosome (mitoribosome), a dedicated translation machinery responsible for the synthesis of mitochondrial genome-encoded proteins, including at least some of the essential transmembrane subunits of the mitochondrial respiratory chain. The mitoribosomes are attached to the mitochondrial inner membrane and translation products are cotranslationally integrated into the membrane. uS3m is essential for mitochondrial protein synthesis and required for the maturation of small ribosomal subunits. This Neurospora crassa (strain ATCC 24698 / 74-OR23-1A / CBS 708.71 / DSM 1257 / FGSC 987) protein is Small ribosomal subunit protein uS3m (var1).